A 315-amino-acid polypeptide reads, in one-letter code: tRNA dimethylallyltransferase (315 aa).

11-18 lines the ATP pocket; it reads GPTASGKS. A substrate-binding site is contributed by 13–18; the sequence is TASGKS. Interaction with substrate tRNA stretches follow at residues 36 to 39 and 160 to 164; these read DSMQ and QRLIR.

Belongs to the IPP transferase family. In terms of assembly, monomer. Mg(2+) is required as a cofactor.

The enzyme catalyses adenosine(37) in tRNA + dimethylallyl diphosphate = N(6)-dimethylallyladenosine(37) in tRNA + diphosphate. Catalyzes the transfer of a dimethylallyl group onto the adenine at position 37 in tRNAs that read codons beginning with uridine, leading to the formation of N6-(dimethylallyl)adenosine (i(6)A). This is tRNA dimethylallyltransferase from Rickettsia bellii (strain RML369-C).